A 95-amino-acid polypeptide reads, in one-letter code: MKITIADVEHVARLARLELSDEEKQLFAGQMDTILGYVDKLKELNTDGIQPTSHAVPMENAFREDQTRPSIGTAKALANAPDPVLGFFRVPKVIE.

The protein belongs to the GatC family. As to quaternary structure, heterotrimer of A, B and C subunits.

The catalysed reaction is L-glutamyl-tRNA(Gln) + L-glutamine + ATP + H2O = L-glutaminyl-tRNA(Gln) + L-glutamate + ADP + phosphate + H(+). It catalyses the reaction L-aspartyl-tRNA(Asn) + L-glutamine + ATP + H2O = L-asparaginyl-tRNA(Asn) + L-glutamate + ADP + phosphate + 2 H(+). In terms of biological role, allows the formation of correctly charged Asn-tRNA(Asn) or Gln-tRNA(Gln) through the transamidation of misacylated Asp-tRNA(Asn) or Glu-tRNA(Gln) in organisms which lack either or both of asparaginyl-tRNA or glutaminyl-tRNA synthetases. The reaction takes place in the presence of glutamine and ATP through an activated phospho-Asp-tRNA(Asn) or phospho-Glu-tRNA(Gln). The polypeptide is Aspartyl/glutamyl-tRNA(Asn/Gln) amidotransferase subunit C (Pelobacter propionicus (strain DSM 2379 / NBRC 103807 / OttBd1)).